The primary structure comprises 543 residues: Putative fatty acyl-CoA reductase CG8303 (543 aa).

The tract at residues M1–N29 is disordered. The span at G8–G22 shows a compositional bias: polar residues. 3 helical membrane passes run L386–F406, V500–L520, and L522–W542.

Belongs to the fatty acyl-CoA reductase family.

It localises to the membrane. The catalysed reaction is a long-chain fatty acyl-CoA + 2 NADPH + 2 H(+) = a long-chain primary fatty alcohol + 2 NADP(+) + CoA. It carries out the reaction hexadecanoyl-CoA + 2 NADPH + 2 H(+) = hexadecan-1-ol + 2 NADP(+) + CoA. It catalyses the reaction octadecanoyl-CoA + 2 NADPH + 2 H(+) = octadecan-1-ol + 2 NADP(+) + CoA. Its function is as follows. Catalyzes the reduction of C16 or C18 fatty acyl-CoA to fatty alcohols. The chain is Putative fatty acyl-CoA reductase CG8303 from Drosophila melanogaster (Fruit fly).